A 180-amino-acid chain; its full sequence is Shikimate kinase (180 aa).

14 to 19 (GAGKSS) provides a ligand contact to ATP. Ser18 is a binding site for Mg(2+). The substrate site is built by Asp36, Arg60, and Gly82. ATP is bound at residue Arg120. Arg139 serves as a coordination point for substrate.

It belongs to the shikimate kinase family. Monomer. Mg(2+) is required as a cofactor.

The protein resides in the cytoplasm. It carries out the reaction shikimate + ATP = 3-phosphoshikimate + ADP + H(+). The protein operates within metabolic intermediate biosynthesis; chorismate biosynthesis; chorismate from D-erythrose 4-phosphate and phosphoenolpyruvate: step 5/7. Its function is as follows. Catalyzes the specific phosphorylation of the 3-hydroxyl group of shikimic acid using ATP as a cosubstrate. In Xylella fastidiosa (strain 9a5c), this protein is Shikimate kinase.